Consider the following 547-residue polypeptide: Probable bifunctional tRNA threonylcarbamoyladenosine biosynthesis protein (547 aa).

A kae1 region spans residues 1–329 (MDTSKDLICI…YRSDMVEVNW (329 aa)). The Fe cation site is built by His-112, His-116, and Tyr-133. L-threonylcarbamoyladenylate is bound by residues 133-137 (YVSGG), Asp-165, Gly-178, Glu-182, and Asn-262. A Fe cation-binding site is contributed by Asp-290. The Protein kinase domain maps to 346 to 547 (IIPEHLIGKG…KEVEKRARYL (202 aa)). ATP contacts are provided by residues 352–360 (IGKGAEADI) and Lys-373. Catalysis depends on Asp-465, which acts as the Proton acceptor; for kinase activity.

The protein in the N-terminal section; belongs to the KAE1 / TsaD family. This sequence in the C-terminal section; belongs to the protein kinase superfamily. Tyr protein kinase family. BUD32 subfamily. In terms of assembly, component of the KEOPS complex that consists of Kae1, Bud32, Cgi121 and Pcc1; the whole complex dimerizes. The cofactor is Fe(2+).

It localises to the cytoplasm. It carries out the reaction L-seryl-[protein] + ATP = O-phospho-L-seryl-[protein] + ADP + H(+). The catalysed reaction is L-threonyl-[protein] + ATP = O-phospho-L-threonyl-[protein] + ADP + H(+). The enzyme catalyses L-threonylcarbamoyladenylate + adenosine(37) in tRNA = N(6)-L-threonylcarbamoyladenosine(37) in tRNA + AMP + H(+). In terms of biological role, required for the formation of a threonylcarbamoyl group on adenosine at position 37 (t(6)A37) in tRNAs that read codons beginning with adenine. Is a component of the KEOPS complex that is probably involved in the transfer of the threonylcarbamoyl moiety of threonylcarbamoyl-AMP (TC-AMP) to the N6 group of A37. The Kae1 domain likely plays a direct catalytic role in this reaction. The Bud32 domain probably displays kinase activity that regulates Kae1 function. This Methanococcus maripaludis (strain C7 / ATCC BAA-1331) protein is Probable bifunctional tRNA threonylcarbamoyladenosine biosynthesis protein.